A 196-amino-acid chain; its full sequence is Agamous-like MADS-box protein AGL27 (196 aa).

The MADS-box domain maps to 1 to 61 (MGRRKIEIKR…GKLYDSSSGD (61 aa)). The K-box domain maps to 80 to 170 (ALDLEEKIQN…ASQMGKNTLL (91 aa)). The segment at 175–196 (ERGMFPGSSSGNKIPETLPLLN) is disordered.

Interacts with AGL39, AGL97 and AGL74. In terms of tissue distribution, expressed in most plant tissues, embryo, seedlings, roots, leaves, stems, inflorescence, pollen, siliques and flowers.

The protein resides in the nucleus. Probable transcription factor involved in the negative regulation of flowering time in both long and short days, probably through the photoperiodic and vernalization pathways. Prevents premature flowering. The sequence is that of Agamous-like MADS-box protein AGL27 (AGL27) from Arabidopsis thaliana (Mouse-ear cress).